The following is a 250-amino-acid chain: Small ribosomal subunit protein uS2 (250 aa).

It belongs to the universal ribosomal protein uS2 family.

This Polaromonas naphthalenivorans (strain CJ2) protein is Small ribosomal subunit protein uS2.